Reading from the N-terminus, the 696-residue chain is Elongation factor G (696 aa).

Residues 8-288 (EDYRNFGIMA…AVVEYLPSPA (281 aa)) enclose the tr-type G domain. GTP-binding positions include 17 to 24 (AHIDAGKT), 86 to 90 (DTPGH), and 140 to 143 (NKMD).

The protein belongs to the TRAFAC class translation factor GTPase superfamily. Classic translation factor GTPase family. EF-G/EF-2 subfamily.

The protein resides in the cytoplasm. Catalyzes the GTP-dependent ribosomal translocation step during translation elongation. During this step, the ribosome changes from the pre-translocational (PRE) to the post-translocational (POST) state as the newly formed A-site-bound peptidyl-tRNA and P-site-bound deacylated tRNA move to the P and E sites, respectively. Catalyzes the coordinated movement of the two tRNA molecules, the mRNA and conformational changes in the ribosome. This chain is Elongation factor G, found in Mesorhizobium japonicum (strain LMG 29417 / CECT 9101 / MAFF 303099) (Mesorhizobium loti (strain MAFF 303099)).